A 58-amino-acid chain; its full sequence is Preprotein translocase subunit SecG (58 aa).

Residues 1 to 33 (MARRKKYEGLNPFVAAGLIKFSEEGEMERIKLS) lie on the Cytoplasmic side of the membrane. Residues 34 to 55 (PKAAIAVSAAIIAALIIINLLL) traverse the membrane as a helical segment. The Extracellular portion of the chain corresponds to 56–58 (PPL).

Belongs to the SEC61-beta family. In terms of assembly, component of the protein translocase complex. Heterotrimer consisting of alpha (SecY), beta (SecG) and gamma (SecE) subunits. Can form oligomers of the heterotrimer.

It localises to the cell membrane. Functionally, involved in protein export. The function of the beta subunit is unknown, but it may be involved in stabilization of the trimeric complex. The polypeptide is Preprotein translocase subunit SecG (Pyrobaculum arsenaticum (strain DSM 13514 / JCM 11321 / PZ6)).